Reading from the N-terminus, the 268-residue chain is Bis(5'-nucleosyl)-tetraphosphatase, symmetrical (268 aa).

The protein belongs to the Ap4A hydrolase family.

It catalyses the reaction P(1),P(4)-bis(5'-adenosyl) tetraphosphate + H2O = 2 ADP + 2 H(+). Functionally, hydrolyzes diadenosine 5',5'''-P1,P4-tetraphosphate to yield ADP. This is Bis(5'-nucleosyl)-tetraphosphatase, symmetrical from Vibrio parahaemolyticus serotype O3:K6 (strain RIMD 2210633).